The primary structure comprises 458 residues: ATP synthase subunit beta (458 aa).

An ATP-binding site is contributed by 148-155 (GGAGVGKT).

The protein belongs to the ATPase alpha/beta chains family. In terms of assembly, F-type ATPases have 2 components, CF(1) - the catalytic core - and CF(0) - the membrane proton channel. CF(1) has five subunits: alpha(3), beta(3), gamma(1), delta(1), epsilon(1). CF(0) has three main subunits: a(1), b(2) and c(9-12). The alpha and beta chains form an alternating ring which encloses part of the gamma chain. CF(1) is attached to CF(0) by a central stalk formed by the gamma and epsilon chains, while a peripheral stalk is formed by the delta and b chains.

The protein localises to the cell inner membrane. It catalyses the reaction ATP + H2O + 4 H(+)(in) = ADP + phosphate + 5 H(+)(out). Functionally, produces ATP from ADP in the presence of a proton gradient across the membrane. The catalytic sites are hosted primarily by the beta subunits. This chain is ATP synthase subunit beta, found in Alkalilimnicola ehrlichii (strain ATCC BAA-1101 / DSM 17681 / MLHE-1).